Consider the following 203-residue polypeptide: Non-histone protein 10 (203 aa).

An N-acetylserine modification is found at S2. Disordered stretches follow at residues K78–P97 and I161–N203. The HMG box DNA-binding region spans P94–N158.

As to quaternary structure, component of the chromatin-remodeling INO80 complex, at least composed of ARP4, ARP5, ARP8, RVB1, RVB2, TAF14, NHP10, IES1, IES3, IES4, IES6, ACT1, IES2, IES5 and INO80.

The protein resides in the nucleus. Probably involved in transcription regulation via its interaction with the INO80 complex, a chromatin remodeling complex. This chain is Non-histone protein 10 (NHP10), found in Saccharomyces cerevisiae (strain ATCC 204508 / S288c) (Baker's yeast).